We begin with the raw amino-acid sequence, 500 residues long: Protein nucleotidyltransferase YdiU (500 aa).

Residues G96, G98, R99, K119, D131, G132, R182, and R189 each contribute to the ATP site. The active-site Proton acceptor is the D258. Residues N259 and D268 each contribute to the Mg(2+) site. D268 lines the ATP pocket.

It belongs to the SELO family. The cofactor is Mg(2+). Mn(2+) is required as a cofactor.

It carries out the reaction L-seryl-[protein] + ATP = 3-O-(5'-adenylyl)-L-seryl-[protein] + diphosphate. The enzyme catalyses L-threonyl-[protein] + ATP = 3-O-(5'-adenylyl)-L-threonyl-[protein] + diphosphate. It catalyses the reaction L-tyrosyl-[protein] + ATP = O-(5'-adenylyl)-L-tyrosyl-[protein] + diphosphate. The catalysed reaction is L-histidyl-[protein] + UTP = N(tele)-(5'-uridylyl)-L-histidyl-[protein] + diphosphate. It carries out the reaction L-seryl-[protein] + UTP = O-(5'-uridylyl)-L-seryl-[protein] + diphosphate. The enzyme catalyses L-tyrosyl-[protein] + UTP = O-(5'-uridylyl)-L-tyrosyl-[protein] + diphosphate. Functionally, nucleotidyltransferase involved in the post-translational modification of proteins. It can catalyze the addition of adenosine monophosphate (AMP) or uridine monophosphate (UMP) to a protein, resulting in modifications known as AMPylation and UMPylation. The polypeptide is Protein nucleotidyltransferase YdiU (Rhizobium leguminosarum bv. trifolii (strain WSM2304)).